Here is a 463-residue protein sequence, read N- to C-terminus: Ribosomal protein uS12 methylthiotransferase RimO (463 aa).

In terms of domain architecture, MTTase N-terminal spans 15 to 130 (PKVGFVSLGC…VMQAVHSHLP (116 aa)). [4Fe-4S] cluster contacts are provided by Cys24, Cys60, Cys89, Cys161, Cys165, and Cys168. A Radical SAM core domain is found at 147 to 392 (LTPRHYAYLK…MEVAEQVSAK (246 aa)). The 69-residue stretch at 395–463 (ARKVGKTLKV…ADGHDLWGEV (69 aa)) folds into the TRAM domain.

Belongs to the methylthiotransferase family. RimO subfamily. Requires [4Fe-4S] cluster as cofactor.

Its subcellular location is the cytoplasm. The catalysed reaction is L-aspartate(89)-[ribosomal protein uS12]-hydrogen + (sulfur carrier)-SH + AH2 + 2 S-adenosyl-L-methionine = 3-methylsulfanyl-L-aspartate(89)-[ribosomal protein uS12]-hydrogen + (sulfur carrier)-H + 5'-deoxyadenosine + L-methionine + A + S-adenosyl-L-homocysteine + 2 H(+). Its function is as follows. Catalyzes the methylthiolation of an aspartic acid residue of ribosomal protein uS12. The protein is Ribosomal protein uS12 methylthiotransferase RimO of Paraburkholderia phymatum (strain DSM 17167 / CIP 108236 / LMG 21445 / STM815) (Burkholderia phymatum).